A 176-amino-acid chain; its full sequence is ATP synthase subunit b (176 aa).

Residues Ile7–Ile27 form a helical membrane-spanning segment. The tract at residues Ser75 to Ser94 is disordered. Basic and acidic residues predominate over residues Asn85–Ser94.

This sequence belongs to the ATPase B chain family. F-type ATPases have 2 components, F(1) - the catalytic core - and F(0) - the membrane proton channel. F(1) has five subunits: alpha(3), beta(3), gamma(1), delta(1), epsilon(1). F(0) has three main subunits: a(1), b(2) and c(10-14). The alpha and beta chains form an alternating ring which encloses part of the gamma chain. F(1) is attached to F(0) by a central stalk formed by the gamma and epsilon chains, while a peripheral stalk is formed by the delta and b chains.

The protein resides in the cell membrane. F(1)F(0) ATP synthase produces ATP from ADP in the presence of a proton or sodium gradient. F-type ATPases consist of two structural domains, F(1) containing the extramembraneous catalytic core and F(0) containing the membrane proton channel, linked together by a central stalk and a peripheral stalk. During catalysis, ATP synthesis in the catalytic domain of F(1) is coupled via a rotary mechanism of the central stalk subunits to proton translocation. Its function is as follows. Component of the F(0) channel, it forms part of the peripheral stalk, linking F(1) to F(0). The sequence is that of ATP synthase subunit b from Oenococcus oeni (strain ATCC BAA-331 / PSU-1).